The following is a 425-amino-acid chain: E3 ubiquitin-protein ligase CBLL2 (425 aa).

Residues cysteine 57–arginine 97 form an RING-type zinc finger. The interval cysteine 96 to arginine 154 is HYB domain. A C2H2-type zinc finger spans residues phenylalanine 112–histidine 138. Disordered regions lie at residues aspartate 241 to proline 297 and threonine 382 to tyrosine 425. A compositionally biased stretch (pro residues) spans proline 398 to serine 408. Over residues glycine 412–tyrosine 425 the composition is skewed to basic residues.

As to quaternary structure, homodimer. Exclusively expressed in testis and sperm, including spermatocytes, round and elongated spermatids, and Leydig cells.

Its subcellular location is the cytoplasm. The catalysed reaction is S-ubiquitinyl-[E2 ubiquitin-conjugating enzyme]-L-cysteine + [acceptor protein]-L-lysine = [E2 ubiquitin-conjugating enzyme]-L-cysteine + N(6)-ubiquitinyl-[acceptor protein]-L-lysine.. It participates in protein modification; protein ubiquitination. E3 ubiquitin ligase catalyzing the covalent attachment of ubiquitin moieties onto substrate proteins. May operate on tyrosine-phosphorylated SRC substrates. The polypeptide is E3 ubiquitin-protein ligase CBLL2 (Homo sapiens (Human)).